The sequence spans 523 residues: Glycine betaine transporter 1 (523 aa).

Transmembrane regions (helical) follow at residues 33–53 (VFGISAGFIALFLVAALVLDA), 71–91 (FDWLFIIAGNIFVIFCLALIV), 109–129 (SFMSWLAMLFAAGMGIGLMFW), 165–185 (FHWGLHPWAIYGVVALSLAFF), 214–234 (IVDILAVLATLFGLATSLGLG), 251–271 (GLGLQIVVITVVTLLAVVSVV), 286–306 (MVVAFLLLILVGLIGWAASLG), 337–357 (WTVFYWAWWISWSPFVGMFIA), 372–392 (VLIVPTVVTVVWMSVFGGLAI), 420–440 (VLPFGNILSIIAVVLVLVFFI), 467–487 (VFWAFMEGAIAVALLWIGGSE), and 496–516 (AISTALPFTFILLAMCVSLLM).

This sequence belongs to the BCCT transporter (TC 2.A.15) family.

It is found in the cell inner membrane. Its function is as follows. Involved in the uptake of the osmoprotectant glycine betaine. The chain is Glycine betaine transporter 1 from Vibrio parahaemolyticus serotype O3:K6 (strain RIMD 2210633).